The chain runs to 107 residues: Large ribosomal subunit protein bL21 (107 aa).

Belongs to the bacterial ribosomal protein bL21 family. In terms of assembly, part of the 50S ribosomal subunit. Contacts protein L20.

Its function is as follows. This protein binds to 23S rRNA in the presence of protein L20. This chain is Large ribosomal subunit protein bL21, found in Pseudothermotoga lettingae (strain ATCC BAA-301 / DSM 14385 / NBRC 107922 / TMO) (Thermotoga lettingae).